A 502-amino-acid chain; its full sequence is Probable glycine dehydrogenase (decarboxylating) subunit 2 (502 aa).

Residue Lys-273 is modified to N6-(pyridoxal phosphate)lysine.

Belongs to the GcvP family. C-terminal subunit subfamily. In terms of assembly, the glycine cleavage system is composed of four proteins: P, T, L and H. In this organism, the P 'protein' is a heterodimer of two subunits. The cofactor is pyridoxal 5'-phosphate.

It carries out the reaction N(6)-[(R)-lipoyl]-L-lysyl-[glycine-cleavage complex H protein] + glycine + H(+) = N(6)-[(R)-S(8)-aminomethyldihydrolipoyl]-L-lysyl-[glycine-cleavage complex H protein] + CO2. Functionally, the glycine cleavage system catalyzes the degradation of glycine. The P protein binds the alpha-amino group of glycine through its pyridoxal phosphate cofactor; CO(2) is released and the remaining methylamine moiety is then transferred to the lipoamide cofactor of the H protein. This Staphylococcus epidermidis (strain ATCC 35984 / DSM 28319 / BCRC 17069 / CCUG 31568 / BM 3577 / RP62A) protein is Probable glycine dehydrogenase (decarboxylating) subunit 2.